An 89-amino-acid polypeptide reads, in one-letter code: Long neurotoxin homolog Pa ID (89 aa).

The signal sequence occupies residues 1–21; that stretch reads MKTLLLTLVVVTIMCLDLGYT. 5 disulfides stabilise this stretch: Cys24–Cys42, Cys35–Cys63, Cys48–Cys52, Cys67–Cys78, and Cys79–Cys84.

Belongs to the three-finger toxin family. Long-chain subfamily. Type II alpha-neurotoxin sub-subfamily. In terms of tissue distribution, expressed by the venom gland.

Its subcellular location is the secreted. Functionally, binds with high affinity to muscular (alpha-1/CHRNA1) and neuronal (alpha-7/CHRNA7) nicotinic acetylcholine receptor (nAChR) and inhibits acetylcholine from binding to the receptor, thereby impairing neuromuscular and neuronal transmission. The chain is Long neurotoxin homolog Pa ID from Pseudechis australis (Mulga snake).